Here is a 431-residue protein sequence, read N- to C-terminus: ATP-dependent protease ATPase subunit HslU (431 aa).

ATP contacts are provided by residues Val-18, 60 to 65 (GVGKTE), Asp-244, Glu-309, and Arg-381.

Belongs to the ClpX chaperone family. HslU subfamily. A double ring-shaped homohexamer of HslV is capped on each side by a ring-shaped HslU homohexamer. The assembly of the HslU/HslV complex is dependent on binding of ATP.

The protein resides in the cytoplasm. ATPase subunit of a proteasome-like degradation complex; this subunit has chaperone activity. The binding of ATP and its subsequent hydrolysis by HslU are essential for unfolding of protein substrates subsequently hydrolyzed by HslV. HslU recognizes the N-terminal part of its protein substrates and unfolds these before they are guided to HslV for hydrolysis. The polypeptide is ATP-dependent protease ATPase subunit HslU (Caulobacter sp. (strain K31)).